An 88-amino-acid polypeptide reads, in one-letter code: Small ribosomal subunit protein uS17 (88 aa).

Belongs to the universal ribosomal protein uS17 family. As to quaternary structure, part of the 30S ribosomal subunit.

Functionally, one of the primary rRNA binding proteins, it binds specifically to the 5'-end of 16S ribosomal RNA. This is Small ribosomal subunit protein uS17 from Ectopseudomonas mendocina (strain ymp) (Pseudomonas mendocina).